The chain runs to 339 residues: Dihydroorotate dehydrogenase (quinone) (339 aa).

Residues 62–66 (AGMDK) and T86 contribute to the FMN site. Residue K66 participates in substrate binding. 111–115 (NRMGF) provides a ligand contact to substrate. FMN-binding residues include N139 and N172. N172 provides a ligand contact to substrate. Catalysis depends on S175, which acts as the Nucleophile. N177 is a substrate binding site. 2 residues coordinate FMN: K217 and T245. Substrate is bound at residue 246 to 247 (NT). FMN contacts are provided by residues G268, G297, and 318 to 319 (YS).

It belongs to the dihydroorotate dehydrogenase family. Type 2 subfamily. Monomer. FMN is required as a cofactor.

It localises to the cell membrane. It catalyses the reaction (S)-dihydroorotate + a quinone = orotate + a quinol. It functions in the pathway pyrimidine metabolism; UMP biosynthesis via de novo pathway; orotate from (S)-dihydroorotate (quinone route): step 1/1. Functionally, catalyzes the conversion of dihydroorotate to orotate with quinone as electron acceptor. The chain is Dihydroorotate dehydrogenase (quinone) from Shewanella pealeana (strain ATCC 700345 / ANG-SQ1).